A 172-amino-acid chain; its full sequence is Large ribosomal subunit protein uL10 (172 aa).

It belongs to the universal ribosomal protein uL10 family. In terms of assembly, part of the ribosomal stalk of the 50S ribosomal subunit. The N-terminus interacts with L11 and the large rRNA to form the base of the stalk. The C-terminus forms an elongated spine to which L12 dimers bind in a sequential fashion forming a multimeric L10(L12)X complex.

Functionally, forms part of the ribosomal stalk, playing a central role in the interaction of the ribosome with GTP-bound translation factors. This is Large ribosomal subunit protein uL10 from Nitrobacter winogradskyi (strain ATCC 25391 / DSM 10237 / CIP 104748 / NCIMB 11846 / Nb-255).